A 263-amino-acid chain; its full sequence is Phosphate import ATP-binding protein PstB (263 aa).

One can recognise an ABC transporter domain in the interval 17 to 258 (ISVKNLDFFY…PKRKETEDYI (242 aa)). 49–56 (GPSGCGKS) serves as a coordination point for ATP.

This sequence belongs to the ABC transporter superfamily. Phosphate importer (TC 3.A.1.7) family. As to quaternary structure, the complex is composed of two ATP-binding proteins (PstB), two transmembrane proteins (PstC and PstA) and a solute-binding protein (PstS).

Its subcellular location is the cell inner membrane. The enzyme catalyses phosphate(out) + ATP + H2O = ADP + 2 phosphate(in) + H(+). Functionally, part of the ABC transporter complex PstSACB involved in phosphate import. Responsible for energy coupling to the transport system. The chain is Phosphate import ATP-binding protein PstB from Polaromonas sp. (strain JS666 / ATCC BAA-500).